Reading from the N-terminus, the 290-residue chain is 33 kDa chaperonin (290 aa).

2 cysteine pairs are disulfide-bonded: Cys235–Cys237 and Cys268–Cys271.

It belongs to the HSP33 family. In terms of processing, under oxidizing conditions two disulfide bonds are formed involving the reactive cysteines. Under reducing conditions zinc is bound to the reactive cysteines and the protein is inactive.

It localises to the cytoplasm. Functionally, redox regulated molecular chaperone. Protects both thermally unfolding and oxidatively damaged proteins from irreversible aggregation. Plays an important role in the bacterial defense system toward oxidative stress. The chain is 33 kDa chaperonin from Streptococcus sanguinis (strain SK36).